Reading from the N-terminus, the 462-residue chain is Protein ultraspiracle homolog (462 aa).

The segment at 1–113 (MSSVAKKDKR…NHPLSGSKHL (113 aa)) is modulating. 2 consecutive NR C4-type zinc fingers follow at residues 114–134 (CSICGDRASGKHYGVYSCEGC) and 150–174 (CREDKNCIIDKRQRNRCQYCRYQKC). Positions 114-179 (CSICGDRASG…RYQKCLACGM (66 aa)) form a DNA-binding region, nuclear receptor. Positions 180–201 (KREAVQEERQRAARRTEDAHPS) are hinge. One can recognise an NR LBD domain in the interval 204-453 (VQELSIERLL…SYIRDALCNH (250 aa)).

This sequence belongs to the nuclear hormone receptor family. NR2 subfamily. As to quaternary structure, heterodimer of USP and ECR. Abundant expression seen in males and ovaries.

Its subcellular location is the nucleus. This is Protein ultraspiracle homolog (USP) from Bombyx mori (Silk moth).